A 719-amino-acid chain; its full sequence is Endonuclease MutS2 (719 aa).

Position 273 to 280 (273 to 280) interacts with ATP; sequence GPNTGGKT. Residues 644–719 form the Smr domain; that stretch reads LDLRGYRYED…GFGVTVATLK (76 aa).

Belongs to the DNA mismatch repair MutS family. MutS2 subfamily. As to quaternary structure, homodimer. Binds to stalled ribosomes, contacting rRNA.

Its function is as follows. Endonuclease that is involved in the suppression of homologous recombination and thus may have a key role in the control of bacterial genetic diversity. Functionally, acts as a ribosome collision sensor, splitting the ribosome into its 2 subunits. Detects stalled/collided 70S ribosomes which it binds and splits by an ATP-hydrolysis driven conformational change. Acts upstream of the ribosome quality control system (RQC), a ribosome-associated complex that mediates the extraction of incompletely synthesized nascent chains from stalled ribosomes and their subsequent degradation. Probably generates substrates for RQC. The sequence is that of Endonuclease MutS2 from Staphylococcus aureus.